A 1209-amino-acid polypeptide reads, in one-letter code: MECYYIVISSTHLSNGHFRNIKGVFRGPLSKNGNKTLDYAEKENTIAKALEDLKANFYCELCDKQYYKHQEFDNHINSYDHAHKQRLKELKQREFARNVASKSRKDERKQEKALQRLHKLAELRKETVCAPGSGPMFKSTTVTVRENCNEISQRVVVDSVNNQQDFKYTLIHSEENTKDATTVAEDPESANNYTAKNNQVGDQAQGIHRHKIGFSFAFPKKASVKLESSAAAFSEYSDDASVGKGFSRKSRFVPSACHLQQSSPTDVLLSSEEKTNSFHPPEAMCRDKETVQTQEIKEVSSEKDALLLPSFCKFQLQLSSDADNCQNSVPLADQIPLESVVINEDIPVSGNSFELLGNKSTVLDMSNDCISVQATTEENVKHNEASTTEVENKNGPETLAPSNTEEVNITIHKKTNFCKRQCEPFVPVLNKHRSTVLQWPSEMLVYTTTKPSISYSCNPLCFDFKSTKVNNNLDKNKPDLKDLCSQQKQEDICMGPLSDYKDVSTEGLTDYEIGSSKNKCSQVTPLLADDILSSSCDSGKNENTGQRYKNISCKIRETEKYNFTKSQIKQDTLDEKYNKIRLKETHEYWFHKSRRKKKRKKLCQHHHMEKTKESETRCKMEAENSYTENAGKYLLEPISEKQYLAAEQLLDSHQLLDKRPKSESISLSDNEEMCKTWNTEYNTYDTISSKNHCKKNTILLNGQSNATMIHSGKHNLTYSRTYCCWKTKMSSCSQDHRSLVLQNDMKHMSQNQAVKRGYNSVMNESERFYRKRRQHSHSYSSDESLNRQNHLPEEFLRPPSTSVAPCKPKKKRRRKRGRFHPGFETLELKENTDYPVKDNSSLNPLDRLISEDKKEKMKPQEVAKIERNSEQTNQLRNKLSFHPNNLLPSETNGETEHLEMETTSGELSDVSNDPTTSVCVASAPTKEAIDNTLLEHKERSENINLNEKQIPFQVPNIERNFRQSQPKSYLCHYELAEALPQGKMNETPTEWLRYNSGILNTQPPLPFKEAHVSGHTFVTAEQILAPLALPEQALLIPLENHDKFKNVPCEVYQHILQPNMLANKVKFTFPPAALPPPSTPLQPLPLQQSLCSTSVTTIHHTVLQQHAAAAAAAAAAAAAGTFKVLQPHQQFLSQIPALTRTSLPQLSVGPVGPRLCPGNQPTFVAPPQMPIIPASVLHPSHLAFPSLPHALFPSLLSPHPTVIPLQPLF.

Residues 57–81 (FYCELCDKQYYKHQEFDNHINSYDH) form a C2H2-type zinc finger. The segment covering 380 to 394 (VKHNEASTTEVENKN) has biased composition (basic and acidic residues). Disordered stretches follow at residues 380-401 (VKHNEASTTEVENKNGPETLAP) and 792-860 (PEEF…MKPQ). A compositionally biased stretch (basic residues) spans 807–819 (KPKKKRRRKRGRF). 2 stretches are compositionally biased toward basic and acidic residues: residues 826-836 (LELKENTDYPV) and 848-860 (LISEDKKEKMKPQ).

The protein is Zinc finger protein 804A (ZNF804A) of Homo sapiens (Human).